Reading from the N-terminus, the 382-residue chain is SOX domain-containing protein dichaete (382 aa).

2 disordered regions span residues 53–142 (GGSP…EGHI) and 346–382 (YPSSSTSSPGSSPGTITPNGMDGSMDSALRRPVPVLY). Positions 60 to 69 (AGQGVNGSSG) are enriched in gly residues. A compositionally biased stretch (low complexity) spans 96–123 (NSSIGSAGSLGSQSSLGSNGSGLNSSSG). Residues 142–210 (IKRPMNAFMV…LHMKEHPDYK (69 aa)) constitute a DNA-binding region (HMG box). The segment covering 347–360 (PSSSTSSPGSSPGT) has biased composition (low complexity).

As to expression, initially expressed in a pair-rule-like pattern which is rapidly replaced by strong neuroectoderm expression.

The protein localises to the nucleus. Its function is as follows. Essential for segmentation and CNS development. May modulate the actions of other transcription factors, including gap and pair-rule proteins. This chain is SOX domain-containing protein dichaete (D), found in Drosophila melanogaster (Fruit fly).